A 688-amino-acid polypeptide reads, in one-letter code: Elongation factor G (688 aa).

The 275-residue stretch at 8–282 (EKFRNFGIMA…GVVDYLPSPL (275 aa)) folds into the tr-type G domain. GTP-binding positions include 17–24 (AHIDAGKT), 81–85 (DTPGH), and 135–138 (NKMD).

It belongs to the TRAFAC class translation factor GTPase superfamily. Classic translation factor GTPase family. EF-G/EF-2 subfamily.

It is found in the cytoplasm. Functionally, catalyzes the GTP-dependent ribosomal translocation step during translation elongation. During this step, the ribosome changes from the pre-translocational (PRE) to the post-translocational (POST) state as the newly formed A-site-bound peptidyl-tRNA and P-site-bound deacylated tRNA move to the P and E sites, respectively. Catalyzes the coordinated movement of the two tRNA molecules, the mRNA and conformational changes in the ribosome. In Clostridium perfringens (strain ATCC 13124 / DSM 756 / JCM 1290 / NCIMB 6125 / NCTC 8237 / Type A), this protein is Elongation factor G.